The chain runs to 136 residues: Heme-binding protein Rv0203 (136 aa).

The N-terminal stretch at 1–27 (MKTGTATTRRRLLAVLIALALPGAAVA) is a signal peptide. C41 and C115 form a disulfide bridge. 3 residues coordinate heme: Y60, H64, and H90.

Dimer of dimers.

It localises to the secreted. Functionally, part of a heme-iron acquisition system. Acts by binding heme and delivering it to the membrane proteins MmpL3 and MmpL11. Can use free heme or heme from host hemoglobin. The protein is Heme-binding protein Rv0203 of Mycobacterium tuberculosis (strain ATCC 25618 / H37Rv).